We begin with the raw amino-acid sequence, 514 residues long: Putative fumarate hydratase class I (514 aa).

The [4Fe-4S] cluster site is built by C62, C187, and C274.

Belongs to the class-I fumarase family. In terms of assembly, homodimer. The cofactor is [4Fe-4S] cluster.

The enzyme catalyses (S)-malate = fumarate + H2O. It participates in carbohydrate metabolism; tricarboxylic acid cycle; (S)-malate from fumarate: step 1/1. Its function is as follows. Catalyzes the reversible hydration of fumarate to (S)-malate. In Geobacillus stearothermophilus (Bacillus stearothermophilus), this protein is Putative fumarate hydratase class I (fumA).